The following is a 761-amino-acid chain: Elongation factor G, mitochondrial (761 aa).

The transit peptide at 1–42 (MSVQKMMRVPRKMVGGRIPFFTCSKVFSGFSRRSFHESPLAR) directs the protein to the mitochondrion. The region spanning 68 to 349 (NKLRNIGISA…AIVDYLPNPS (282 aa)) is the tr-type G domain. Residues 77-84 (AHIDSGKT), 148-152 (DTPGH), and 202-205 (NKMD) contribute to the GTP site.

The protein belongs to the TRAFAC class translation factor GTPase superfamily. Classic translation factor GTPase family. EF-G/EF-2 subfamily. Post-translationally, the precursor is processed in two steps involving mitochondrial intermediate peptidase (MIP) and mitochondrial processing peptidase (MPP).

It is found in the mitochondrion. The protein operates within protein biosynthesis; polypeptide chain elongation. Mitochondrial GTPase that catalyzes the GTP-dependent ribosomal translocation step during translation elongation. During this step, the ribosome changes from the pre-translocational (PRE) to the post-translocational (POST) state as the newly formed A-site-bound peptidyl-tRNA and P-site-bound deacylated tRNA move to the P and E sites, respectively. Catalyzes the coordinated movement of the two tRNA molecules, the mRNA and conformational changes in the ribosome. In Saccharomyces cerevisiae (strain YJM789) (Baker's yeast), this protein is Elongation factor G, mitochondrial.